We begin with the raw amino-acid sequence, 265 residues long: Hydroxyethylthiazole kinase (265 aa).

M50 provides a ligand contact to substrate. 2 residues coordinate ATP: R125 and T171. A substrate-binding site is contributed by G198.

Belongs to the Thz kinase family. Mg(2+) serves as cofactor.

The enzyme catalyses 5-(2-hydroxyethyl)-4-methylthiazole + ATP = 4-methyl-5-(2-phosphooxyethyl)-thiazole + ADP + H(+). It functions in the pathway cofactor biosynthesis; thiamine diphosphate biosynthesis; 4-methyl-5-(2-phosphoethyl)-thiazole from 5-(2-hydroxyethyl)-4-methylthiazole: step 1/1. Catalyzes the phosphorylation of the hydroxyl group of 4-methyl-5-beta-hydroxyethylthiazole (THZ). This Salmonella paratyphi C (strain RKS4594) protein is Hydroxyethylthiazole kinase.